The sequence spans 417 residues: Serine hydroxymethyltransferase (417 aa).

(6S)-5,6,7,8-tetrahydrofolate contacts are provided by residues Leu-121 and 125–127 (GHL). At Lys-229 the chain carries N6-(pyridoxal phosphate)lysine. 354 to 356 (SPF) is a (6S)-5,6,7,8-tetrahydrofolate binding site.

Belongs to the SHMT family. As to quaternary structure, homodimer. The cofactor is pyridoxal 5'-phosphate.

The protein localises to the cytoplasm. The enzyme catalyses (6R)-5,10-methylene-5,6,7,8-tetrahydrofolate + glycine + H2O = (6S)-5,6,7,8-tetrahydrofolate + L-serine. It functions in the pathway one-carbon metabolism; tetrahydrofolate interconversion. The protein operates within amino-acid biosynthesis; glycine biosynthesis; glycine from L-serine: step 1/1. Its function is as follows. Catalyzes the reversible interconversion of serine and glycine with tetrahydrofolate (THF) serving as the one-carbon carrier. This reaction serves as the major source of one-carbon groups required for the biosynthesis of purines, thymidylate, methionine, and other important biomolecules. Also exhibits THF-independent aldolase activity toward beta-hydroxyamino acids, producing glycine and aldehydes, via a retro-aldol mechanism. This chain is Serine hydroxymethyltransferase, found in Dichelobacter nodosus (strain VCS1703A).